A 504-amino-acid chain; its full sequence is Putative pentatricopeptide repeat-containing protein At3g28640 (504 aa).

9 PPR repeats span residues 77 to 107 (NSFV…MVKE), 115 to 149 (SYLT…GVFL), 151 to 181 (DSHV…IPQP), 182 to 216 (DVVK…GLEP), 217 to 251 (DEFS…SWIE), 253 to 287 (DVFV…NVFS), 288 to 319 (WAAL…GIKP), 320 to 350 (DSVV…MEAR), and 356 to 390 (KHEH…PLAS). The type E motif stretch occupies residues 391–470 (VWGALLNGCR…TPGWSVLEVD (80 aa)). Residues 471-501 (GNVTKFVSGDVSHPNLLQIHTVIHLLSVDAL) form a type E(+) motif region.

It belongs to the PPR family. PCMP-E subfamily.

The protein is Putative pentatricopeptide repeat-containing protein At3g28640 (PCMP-E79) of Arabidopsis thaliana (Mouse-ear cress).